We begin with the raw amino-acid sequence, 319 residues long: Carbonic anhydrase 6 (319 aa).

Residues 1–14 (MITLLFLLVVGAQA) form the signal peptide. Positions 16-273 (HEWTYSEGVL…LNHRVVEANF (258 aa)) constitute an Alpha-carbonic anhydrase domain. Cys-37 and Cys-219 are disulfide-bonded. The N-linked (GlcNAc...) asparagine glycan is linked to Asn-62. The active-site Proton donor/acceptor is His-80. Zn(2+)-binding residues include His-106, His-108, and His-133. A substrate-binding site is contributed by 215 to 216 (TT). Asn-251 carries an N-linked (GlcNAc...) asparagine glycan.

The protein belongs to the alpha-carbonic anhydrase family. Zn(2+) is required as a cofactor. As to expression, major constituent of saliva.

The protein resides in the secreted. It catalyses the reaction hydrogencarbonate + H(+) = CO2 + H2O. In terms of biological role, reversible hydration of carbon dioxide. Its role in saliva is unknown. The protein is Carbonic anhydrase 6 (CA6) of Bos taurus (Bovine).